The primary structure comprises 569 residues: Probable protein phosphatase 2C BIPP2C1 (569 aa).

2 disordered regions span residues 166–212 (GSSN…SSKV) and 251–279 (SLDDSEASDGSTTQDFDTDVETESSGSSI). Residues 174-183 (SEVGVESECG) show a composition bias toward low complexity. The PPM-type phosphatase domain occupies 329–564 (AAMLPHPSKV…DDVTVVVSVV (236 aa)). Mn(2+) is bound by residues D358, G359, D488, and D555.

It belongs to the PP2C family. Mg(2+) is required as a cofactor. It depends on Mn(2+) as a cofactor.

It carries out the reaction O-phospho-L-seryl-[protein] + H2O = L-seryl-[protein] + phosphate. The catalysed reaction is O-phospho-L-threonyl-[protein] + H2O = L-threonyl-[protein] + phosphate. In terms of biological role, may play a role in responses to biotic and abiotic stresses. This chain is Probable protein phosphatase 2C BIPP2C1 (BIPP2C1), found in Oryza sativa subsp. indica (Rice).